A 763-amino-acid chain; its full sequence is Ethylene receptor 2 (763 aa).

The next 3 membrane-spanning stretches (helical) occupy residues F58–S78, I86–F106, and V115–I135. Residues C97 and H101 each coordinate Cu cation. The region spanning D190 to L339 is the GAF domain. The region spanning A382 to L615 is the Histidine kinase domain. The region spanning Q641–L760 is the Response regulatory domain. D692 bears the 4-aspartylphosphate mark.

Belongs to the ethylene receptor family. Requires Cu cation as cofactor. In terms of processing, autophosphorylated on serine, threonine and tyrosine residues.

It localises to the endoplasmic reticulum membrane. The catalysed reaction is ATP + protein L-histidine = ADP + protein N-phospho-L-histidine.. Ethylene receptor related to bacterial two-component regulators. Acts as a negative regulator of ethylene signaling. May delay the transition from the vegetative stage to the floral stage by up-regulating GI (GIGANTEA) and RCN1 and cause starch accumulation in stems by down-regulating the alpha-amylase AMY3D. In Oryza sativa subsp. japonica (Rice), this protein is Ethylene receptor 2.